The following is a 64-amino-acid chain: Cecropin-A (64 aa).

The N-terminal stretch at 1–22 (MNFSRIFFFVFACLTALAMVNA) is a signal peptide. Residues 23 to 26 (APEP) constitute a propeptide, removed by a dipeptidylpeptidase. Lys-63 is modified (lysine amide).

It belongs to the cecropin family. In terms of processing, a protein with the same sequence as cecropin A, but lacking the carboxyl blocking group, has been isolated and called cecropin C.

The protein localises to the secreted. Cecropins have lytic and antibacterial activity against several Gram-positive and Gram-negative bacteria. The protein is Cecropin-A of Hyalophora cecropia (Cecropia moth).